An 810-amino-acid polypeptide reads, in one-letter code: MDGFRVAGALVVGALTAAYLYFGGRFSIALVIIVGYGIYCNEASGGSQDSQEKLDLNKQQKKPCCSDKKIADGGKKTGGCCSDKKNGGGKGGGCCSSKGGKKGGCCSSKGGKKGGCCSSKKNIGDNENTATEVEKAVNYPVTVDFTEVFRKPTKKRSSTPKVFSKNSSSNSRVGKKLSVSKKIGPDGLIKSALTISNETLLSSQIYVLYSSLQGAASKAAKSVYDKLKELDELTNEPKLLNLDDLSDFDDYFINVPVENALYVLVLPSYDIDCPLDYFLQTLEENANDFRVDSFPLRKLVGYTVLGLGDSESWPEKFCYQAKRADHWISRLGGRRIFPLGKVCMKTGGSAKIDEWTSLLAETLKDDEPIIYEYDENADSEEDEEEGNGSDELGDVEDIGGKGSNGKFSGADEIKQMVAKDSPTYKNLTKQGYKVIGSHSGVKICRWTKNELRGKGSCYKKSLFNIASSRCMELTPSLACSSKCVFCWRHGTNPVSKNWRWEVDEPEYILENALKGHYSMIKQMRGVPGVIAERFAKAFEVRHCALSLVGEPILYPHINKFIQLLHQKGITSFLVCNAQHPEALRNIVKVTQLYVSIDAPTKTELKKVDRPLYKDFWERMVECLEILKTVQNHQRTVFRLTLVKGFNMGDVSAYADLVQRGLPGFIEVKGATFSGSSDGNGNPLTMQNIPFYEECVKFVKAFTTELQRRGLHYDLAAEHAHSNCLLIADTKFKINGEWHTHIDFDKFFVLLNSGKDFTYMDYLEKTPEWALFGNGGFAPGNTRVYRKDKKKQNKENQETTTRETPLPPIPA.

Disordered stretches follow at residues 86 to 116 (NGGG…KGGC) and 156 to 176 (RSST…VGKK). Over residues 104–116 (GCCSSKGGKKGGC) the composition is skewed to low complexity. The span at 159–172 (TPKVFSKNSSSNSR) shows a compositional bias: polar residues. The Flavodoxin-like domain occupies 205–360 (IYVLYSSLQG…KIDEWTSLLA (156 aa)). FMN contacts are provided by residues 211 to 215 (SLQGA) and 304 to 337 (VLGL…RRIF). The span at 374 to 397 (DENADSEEDEEEGNGSDELGDVED) shows a compositional bias: acidic residues. The segment at 374 to 407 (DENADSEEDEEEGNGSDELGDVEDIGGKGSNGKF) is disordered. The Radical SAM core domain maps to 463–713 (FNIASSRCME…ELQRRGLHYD (251 aa)). Positions 479, 483, and 486 each coordinate [4Fe-4S] cluster. A Glycyl lysine isopeptide (Lys-Gly) (interchain with G-Cter in ubiquitin) cross-link involves residue lysine 496. Positions 782–810 (RVYRKDKKKQNKENQETTTRETPLPPIPA) are disordered.

Belongs to the TYW1 family. Requires [4Fe-4S] cluster as cofactor.

It localises to the endoplasmic reticulum. The catalysed reaction is N(1)-methylguanosine(37) in tRNA(Phe) + pyruvate + S-adenosyl-L-methionine = 4-demethylwyosine(37) in tRNA(Phe) + 5'-deoxyadenosine + L-methionine + CO2 + H2O. The protein operates within tRNA modification; wybutosine-tRNA(Phe) biosynthesis. In terms of biological role, component of the wybutosine biosynthesis pathway. Wybutosine is a hyper modified guanosine with a tricyclic base found at the 3'-position adjacent to the anticodon of eukaryotic phenylalanine tRNA. Catalyzes the condensation of N-methylguanine with 2 carbon atoms from pyruvate to form the tricyclic 4-demethylwyosine, an intermediate in wybutosine biosynthesis. The protein is S-adenosyl-L-methionine-dependent tRNA 4-demethylwyosine synthase (TYW1) of Saccharomyces cerevisiae (strain ATCC 204508 / S288c) (Baker's yeast).